The following is a 295-amino-acid chain: Methionine aminopeptidase (295 aa).

His63 is a substrate binding site. Residues Asp83, Asp94, and His154 each contribute to the a divalent metal cation site. His162 is a substrate binding site. Residues Glu188 and Glu281 each coordinate a divalent metal cation.

Belongs to the peptidase M24A family. Methionine aminopeptidase archaeal type 2 subfamily. Monomer. Co(2+) serves as cofactor. Requires Zn(2+) as cofactor. Mn(2+) is required as a cofactor. It depends on Fe(2+) as a cofactor.

It carries out the reaction Release of N-terminal amino acids, preferentially methionine, from peptides and arylamides.. In terms of biological role, removes the N-terminal methionine from nascent proteins. The N-terminal methionine is often cleaved when the second residue in the primary sequence is small and uncharged (Met-Ala-, Cys, Gly, Pro, Ser, Thr, or Val). This Thermococcus kodakarensis (strain ATCC BAA-918 / JCM 12380 / KOD1) (Pyrococcus kodakaraensis (strain KOD1)) protein is Methionine aminopeptidase.